A 382-amino-acid polypeptide reads, in one-letter code: Mannitol-1-phosphate 5-dehydrogenase (382 aa).

NAD(+) is bound at residue 3 to 14 (ALHFGAGNIGRG). Residue K269 is modified to N6-acetyllysine.

It belongs to the mannitol dehydrogenase family.

It catalyses the reaction D-mannitol 1-phosphate + NAD(+) = beta-D-fructose 6-phosphate + NADH + H(+). The chain is Mannitol-1-phosphate 5-dehydrogenase from Escherichia coli O17:K52:H18 (strain UMN026 / ExPEC).